Consider the following 161-residue polypeptide: MARQKKYSGKGGARKKNKQKQSVAPRRRVEFKYKGFTLEELQEMPIKKFMEIVPSRQRRTMLRGITPNQRKLVMKIKKARRLTNRGKEPRVIRTHCRDFVITPEMIGLTFGIYNGKEFKEIKLVEETVGRFLGEMAPTRSVVQHGSPGMGATRGSMFVPIK.

Over residues Met1 to Gln19 the composition is skewed to basic residues. A disordered region spans residues Met1–Arg26.

The protein belongs to the universal ribosomal protein uS19 family.

Its function is as follows. Protein S19 forms a complex with S13 that binds strongly to the 16S ribosomal RNA. The sequence is that of Small ribosomal subunit protein uS19 from Methanococcus maripaludis (strain C7 / ATCC BAA-1331).